We begin with the raw amino-acid sequence, 130 residues long: Small ribosomal subunit protein uS9 (130 aa).

The protein belongs to the universal ribosomal protein uS9 family.

The sequence is that of Small ribosomal subunit protein uS9 from Pseudomonas paraeruginosa (strain DSM 24068 / PA7) (Pseudomonas aeruginosa (strain PA7)).